Here is a 116-residue protein sequence, read N- to C-terminus: Large ribosomal subunit protein bL20 (116 aa).

This sequence belongs to the bacterial ribosomal protein bL20 family.

Its function is as follows. Binds directly to 23S ribosomal RNA and is necessary for the in vitro assembly process of the 50S ribosomal subunit. It is not involved in the protein synthesizing functions of that subunit. In Mycoplasmopsis synoviae (strain 53) (Mycoplasma synoviae), this protein is Large ribosomal subunit protein bL20.